Consider the following 653-residue polypeptide: Elongation factor 4 (653 aa).

Positions 1–30 (MRTPCSQHRRDRPSAIGSQLPDADTLDTRQ) are disordered. In terms of domain architecture, tr-type G spans 50–231 (AQIRNFCIIA…EVVRQVPPPQ (182 aa)). Residues 62–67 (DHGKST) and 178–181 (NKID) each bind GTP.

It belongs to the TRAFAC class translation factor GTPase superfamily. Classic translation factor GTPase family. LepA subfamily.

The protein resides in the cell membrane. It catalyses the reaction GTP + H2O = GDP + phosphate + H(+). Functionally, required for accurate and efficient protein synthesis under certain stress conditions. May act as a fidelity factor of the translation reaction, by catalyzing a one-codon backward translocation of tRNAs on improperly translocated ribosomes. Back-translocation proceeds from a post-translocation (POST) complex to a pre-translocation (PRE) complex, thus giving elongation factor G a second chance to translocate the tRNAs correctly. Binds to ribosomes in a GTP-dependent manner. The protein is Elongation factor 4 of Mycobacterium bovis (strain ATCC BAA-935 / AF2122/97).